The primary structure comprises 117 residues: uncharacterized protein (117 aa).

Its subcellular location is the plastid. It localises to the chloroplast. This is an uncharacterized protein from Chlamydomonas reinhardtii (Chlamydomonas smithii).